The following is a 580-amino-acid chain: Acyl-coenzyme A synthetase ACSM4, mitochondrial (580 aa).

The transit peptide at 1–22 (MKIFFRYQTFRFIWLTKPPGRR) directs the protein to the mitochondrion. ATP contacts are provided by residues 229 to 237 (TSGTTGFPK), 368 to 373 (EGYGQT), Asp-455, Arg-470, and Lys-566.

It belongs to the ATP-dependent AMP-binding enzyme family. Mg(2+) serves as cofactor. Mn(2+) is required as a cofactor.

It localises to the mitochondrion. The catalysed reaction is a medium-chain fatty acid + ATP + CoA = a medium-chain fatty acyl-CoA + AMP + diphosphate. The enzyme catalyses hexanoate + ATP + CoA = hexanoyl-CoA + AMP + diphosphate. It carries out the reaction octanoate + ATP + CoA = octanoyl-CoA + AMP + diphosphate. It catalyses the reaction decanoate + ATP + CoA = decanoyl-CoA + AMP + diphosphate. The catalysed reaction is dodecanoate + ATP + CoA = dodecanoyl-CoA + AMP + diphosphate. Functionally, catalyzes the activation of fatty acids by CoA to produce an acyl-CoA, the first step in fatty acid metabolism. Capable of activating medium-chain fatty acids with a preference for C6-12 fatty acids. This Homo sapiens (Human) protein is Acyl-coenzyme A synthetase ACSM4, mitochondrial (ACSM4).